Consider the following 394-residue polypeptide: MEGISALEKNVAELTVMDVYDIASAVGQEFERVIDQYGCEVIGRLMPKVVRVLEILEVLVSRNHINPEMEELRLELDRLRLERMDRIEKEKKHLKELELVEDVWRGEAQDLLNQISQLQEENKQLLTNLSHKDVNLTEEEFQKHEGMSERERQVMKKLKEVVDKQRDEIRARDRELVLKNEDVEALQQQQSRLIKINHDLRHRVTVVEAQGKALIEQKVELEAYLQTKEQEAASMRIEIGKLRDKLKGEHHTNGEEIKTETLNEECIFETEKFSLDLKDSNRPRFTLQELRDVLHERNELKAKVFMLQEELAYYKSEEAEEENKLPQSLPVINSKAPIPQESGIKRLFSFFSRDKKRMPMMQKNVHFQESFGEWTNYNRDDVYTEQGQEALQHM.

The region spanning 2–89 (EGISALEKNV…RLERMDRIEK (88 aa)) is the RH1 domain. Residues 68–327 (EMEELRLELD…EAEEENKLPQ (260 aa)) are a coiled coil. The RH2 domain occupies 282-347 (RPRFTLQELR…IPQESGIKRL (66 aa)).

Belongs to the RILPL family.

The protein localises to the cytoplasm. It is found in the cytosol. Its subcellular location is the cytoskeleton. The protein resides in the microtubule organizing center. It localises to the centrosome. The protein localises to the cell projection. It is found in the cilium. In terms of biological role, plays a role in the regulation of cell shape and polarity. Plays a role in cellular protein transport, including protein transport away from primary cilia. Neuroprotective protein. The polypeptide is RILP-like protein 1 (rilpl1) (Xenopus laevis (African clawed frog)).